The following is a 298-amino-acid chain: Probable phosphite transport system-binding protein HtxB (298 aa).

Positions 1–33 (MQVFTLFSKFKKALTRAILAFIATIIVCTPAQA) are cleaved as a signal peptide.

This sequence belongs to the phosphate/phosphite/phosphonate binding protein family.

In terms of biological role, probably forms part of a binding-protein-dependent hypophosphite transporter. This chain is Probable phosphite transport system-binding protein HtxB (htxB), found in Stutzerimonas stutzeri (Pseudomonas stutzeri).